The primary structure comprises 191 residues: Peptidyl-tRNA hydrolase (191 aa).

Residue Tyr14 coordinates tRNA. His19 serves as the catalytic Proton acceptor. TRNA is bound by residues Tyr64, Asn66, and Asn112.

It belongs to the PTH family. As to quaternary structure, monomer.

The protein localises to the cytoplasm. The enzyme catalyses an N-acyl-L-alpha-aminoacyl-tRNA + H2O = an N-acyl-L-amino acid + a tRNA + H(+). Hydrolyzes ribosome-free peptidyl-tRNAs (with 1 or more amino acids incorporated), which drop off the ribosome during protein synthesis, or as a result of ribosome stalling. Functionally, catalyzes the release of premature peptidyl moieties from peptidyl-tRNA molecules trapped in stalled 50S ribosomal subunits, and thus maintains levels of free tRNAs and 50S ribosomes. This Lachnoclostridium phytofermentans (strain ATCC 700394 / DSM 18823 / ISDg) (Clostridium phytofermentans) protein is Peptidyl-tRNA hydrolase.